A 110-amino-acid polypeptide reads, in one-letter code: Prothymosin alpha (110 aa).

Met1 is subject to N-acetylmethionine. Positions 1–110 are disordered; the sequence is MSDAAVDTSS…TKKQKTDEDD (110 aa). Ser2 is modified (N-acetylserine; in Prothymosin alpha, N-terminally processed). Ser2 bears the Phosphoserine mark. Thr8 carries the post-translational modification Phosphothreonine. Phosphoserine occurs at positions 9 and 10. Residues Thr13 and Thr14 each carry the phosphothreonine modification. Residues 13–31 show a composition bias toward basic and acidic residues; sequence TTKDLKEKKEVVEEAENGR. At Lys15 the chain carries N6-acetyllysine; alternate. Position 15 is an N6-succinyllysine; alternate (Lys15). Positions 42–83 are enriched in acidic residues; the sequence is ENGEQEADNEVDEEEEEGGEEEEEEEEGDGEEEDGDEDEEAE. Over residues 100–110 the composition is skewed to basic and acidic residues; the sequence is DTKKQKTDEDD. Thr101 carries the post-translational modification Phosphothreonine. Position 102 is an N6-acetyllysine; alternate (Lys102). Lys102 is covalently cross-linked (Glycyl lysine isopeptide (Lys-Gly) (interchain with G-Cter in SUMO2); alternate). Thr106 is modified (phosphothreonine).

It belongs to the pro/parathymosin family. Interacts with NUPR1; regulates apoptotic process. Post-translationally, covalently linked to a small RNA of about 20 nucleotides.

The protein resides in the nucleus. In terms of biological role, prothymosin alpha may mediate immune function by conferring resistance to certain opportunistic infections. This chain is Prothymosin alpha (PTMA), found in Pongo abelii (Sumatran orangutan).